Reading from the N-terminus, the 162-residue chain is uncharacterized protein (162 aa).

5 helical membrane passes run 15-40 (TIYSIVGIFLIIILDVTVAVALYFLL), 47-66 (ISMLMSLFRIVYAAIFTTAL), 76-98 (YSILDLGYIFFGIHLFLLGFLVY), 105-124 (KWLGALIFIASTGYIIDPLL), and 128-150 (GYAVEIGMYTFFGEVLFAFWLVI).

The protein resides in the cell membrane. This is an uncharacterized protein from Archaeoglobus fulgidus (strain ATCC 49558 / DSM 4304 / JCM 9628 / NBRC 100126 / VC-16).